The chain runs to 823 residues: Endoplasmin homolog (823 aa).

An N-terminal signal peptide occupies residues 1–23 (MRKRTLVSVLFLFSLLFLLPDQG). A disordered region spans residues 29–60 (NAEESSDDVTDPPKVEEKIGGHGGLSTDSDVV). Basic and acidic residues predominate over residues 39–48 (DPPKVEEKIG). ATP-binding positions include E106, N110, D154, M159, N167, K173, 174 to 175 (SG), 194 to 199 (QFGVGF), F199, and T246. The N-linked (GlcNAc...) asparagine glycan is linked to N110. The segment at 289 to 328 (ETEVPVEEDESADEETETTSTEEEKEEDAEEEDGEKKQKT) is disordered. Residues 290 to 321 (TEVPVEEDESADEETETTSTEEEKEEDAEEED) show a composition bias toward acidic residues. 2 N-linked (GlcNAc...) asparagine glycosylation sites follow: N452 and N620. A compositionally biased stretch (acidic residues) spans 777–792 (VADEEIEAAEEPETSE). Residues 777 to 823 (VADEEIEAAEEPETSEATETKSDDLAGGLNIEAEPVEQQEENTKDEL) are disordered. The Prevents secretion from ER signature appears at 820–823 (KDEL).

Belongs to the heat shock protein 90 family. As to quaternary structure, interacts with FKBP42. Interacts with P23-1. In terms of tissue distribution, ubiquitous.

Its subcellular location is the endoplasmic reticulum lumen. In terms of biological role, may have a molecular chaperone role in the processing of secreted materials. Required for shoot apical meristem (SAM), root apical meristem (RAM) and floral meristem (FM) formation, probably by regulating the folding of CLAVATA proteins (CLVs). Also involved in pollen tube elongation. Involved in resistance to tunicamycin- or high calcium-induced ER stresses. Possesses ATPase activity. The sequence is that of Endoplasmin homolog from Arabidopsis thaliana (Mouse-ear cress).